The following is a 256-amino-acid chain: 6-carboxyhexanoate--CoA ligase (256 aa).

It belongs to the BioW family. Homodimer. Mg(2+) serves as cofactor.

It carries out the reaction heptanedioate + ATP + CoA = 6-carboxyhexanoyl-CoA + AMP + diphosphate. It participates in metabolic intermediate metabolism; pimeloyl-CoA biosynthesis; pimeloyl-CoA from pimelate: step 1/1. Its function is as follows. Catalyzes the transformation of pimelate into pimeloyl-CoA with concomitant hydrolysis of ATP to AMP. This is 6-carboxyhexanoate--CoA ligase from Bacillus velezensis (strain DSM 23117 / BGSC 10A6 / LMG 26770 / FZB42) (Bacillus amyloliquefaciens subsp. plantarum).